A 487-amino-acid chain; its full sequence is 3-octaprenyl-4-hydroxybenzoate carboxy-lyase (487 aa).

Position 172 (Asn-172) interacts with Mn(2+). Prenylated FMN-binding positions include 175–177, 189–191, and 194–195; these read IYR, RWL, and RG. Residue Glu-238 participates in Mn(2+) binding. Asp-287 (proton donor) is an active-site residue.

The protein belongs to the UbiD family. In terms of assembly, homohexamer. It depends on prenylated FMN as a cofactor. Mn(2+) is required as a cofactor.

The protein resides in the cell membrane. The catalysed reaction is a 4-hydroxy-3-(all-trans-polyprenyl)benzoate + H(+) = a 2-(all-trans-polyprenyl)phenol + CO2. It functions in the pathway cofactor biosynthesis; ubiquinone biosynthesis. Catalyzes the decarboxylation of 3-octaprenyl-4-hydroxy benzoate to 2-octaprenylphenol, an intermediate step in ubiquinone biosynthesis. The sequence is that of 3-octaprenyl-4-hydroxybenzoate carboxy-lyase from Actinobacillus pleuropneumoniae serotype 7 (strain AP76).